Here is a 335-residue protein sequence, read N- to C-terminus: Olfactory receptor 52B6 (335 aa).

At Met-1–Ile-45 the chain is on the extracellular side. A glycan (N-linked (GlcNAc...) asparagine) is linked at Asn-23. A helical membrane pass occupies residues Trp-46–Ile-66. Over Cys-67–Ile-74 the chain is Cytoplasmic. Residues Leu-75 to Thr-95 form a helical membrane-spanning segment. Topologically, residues Thr-96–Thr-119 are extracellular. An intrachain disulfide couples Cys-117 to Cys-208. A helical membrane pass occupies residues Gln-120–Phe-139. Over Asp-140–Lys-158 the chain is Cytoplasmic. The helical transmembrane segment at Val-159–Ile-179 threads the bilayer. Over Phe-180–Val-215 the chain is Extracellular. Residues Trp-216–Ser-236 form a helical membrane-spanning segment. Residues Tyr-237 to Ala-256 are Cytoplasmic-facing. A helical transmembrane segment spans residues Leu-257–Ser-277. The Extracellular portion of the chain corresponds to Val-278 to His-293. Residues Ile-294–Val-314 form a helical membrane-spanning segment. Residues Arg-315–Lys-335 are Cytoplasmic-facing.

It belongs to the G-protein coupled receptor 1 family.

The protein resides in the cell membrane. In terms of biological role, odorant receptor. This is Olfactory receptor 52B6 (OR52B6) from Homo sapiens (Human).